A 694-amino-acid polypeptide reads, in one-letter code: MAGVLRSLRFWMIICVQVLSLVLAQDRDEFVYHDFSQADLHLDGMASIDDGRLHLTNNTTKSTGHAFWKIPMNFTTSPSSSLSFSTEFVFAIFPLLGDGQGMAFVVAPFMDIRYSGDAASYLGLFNRKNDNKTENHILAVELDTNSSPEAIEDSDNHVGIDINSIISEDSANASYFSGTEGKNISFRLASEKSILVWIDYNGTEKLLNVTVAPVPTPKPALPYLSSSIKPRKPLLSRFINISEIFNGTMFVGFSGSTGTVKSDQYILGWSFKKGGQAESLDLSKILDPPNRPPPPSSPPPPPPPPPTPPTSRSKDSKNIIIICVTVTSIAFLLMLGGFLYLYKKKKYAEVLEHWENEYSPQRYSFRNLYKAIRGFRENRLLGAGGFGKVYKGELPSGTQIAVKRVYHNAEQGMKQYAAEIASMGRLRHKNLVQLLGYCRRKGELLLVYDYMPNGSLDDYLFNKNKLKDLTWSQRVNIIKGVASALLYLHEEWEQVVLHRDIKASNILLDADLNGRLGDFGLARFHDRGENLQATRVVGTIGYMAPELTAMGVATTKTDIYAFGSFILEVVCGRRPVEPDRPPEQMHLLKWVATCGKRDTLMDVVDSKLGDFKAKEAKLLLKLGMLCSQSNPESRPSMRHIIQYLEGNATIPSISFDTAGFGIPNISNETITQMTATSSSANFSFEDVTILFGGR.

The first 24 residues, 1–24 (MAGVLRSLRFWMIICVQVLSLVLA), serve as a signal peptide directing secretion. The Extracellular segment spans residues 25–318 (QDRDEFVYHD…PTSRSKDSKN (294 aa)). Residues 27–272 (RDEFVYHDFS…DQYILGWSFK (246 aa)) form a legume-lectin like region. N-linked (GlcNAc...) asparagine glycans are attached at residues asparagine 57, asparagine 58, asparagine 73, asparagine 131, asparagine 172, asparagine 183, asparagine 201, asparagine 208, asparagine 240, and asparagine 246. The segment at 283–314 (SKILDPPNRPPPPSSPPPPPPPPPTPPTSRSK) is disordered. Residues 289-309 (PNRPPPPSSPPPPPPPPPTPP) show a composition bias toward pro residues. A helical membrane pass occupies residues 319–339 (IIIICVTVTSIAFLLMLGGFL). The Cytoplasmic portion of the chain corresponds to 340-694 (YLYKKKKYAE…EDVTILFGGR (355 aa)). Residues 375–650 (FRENRLLGAG…IQYLEGNATI (276 aa)) form the Protein kinase domain. Residues 381 to 389 (LGAGGFGKV) and lysine 403 each bind ATP. Aspartate 500 (proton acceptor) is an active-site residue.

The protein in the C-terminal section; belongs to the protein kinase superfamily. Ser/Thr protein kinase family. It in the N-terminal section; belongs to the leguminous lectin family.

It is found in the cell membrane. It catalyses the reaction L-seryl-[protein] + ATP = O-phospho-L-seryl-[protein] + ADP + H(+). The enzyme catalyses L-threonyl-[protein] + ATP = O-phospho-L-threonyl-[protein] + ADP + H(+). This is Putative L-type lectin-domain containing receptor kinase II.2 (LECRK22) from Arabidopsis thaliana (Mouse-ear cress).